The following is a 156-amino-acid chain: SsrA-binding protein (156 aa).

This sequence belongs to the SmpB family.

It is found in the cytoplasm. Functionally, required for rescue of stalled ribosomes mediated by trans-translation. Binds to transfer-messenger RNA (tmRNA), required for stable association of tmRNA with ribosomes. tmRNA and SmpB together mimic tRNA shape, replacing the anticodon stem-loop with SmpB. tmRNA is encoded by the ssrA gene; the 2 termini fold to resemble tRNA(Ala) and it encodes a 'tag peptide', a short internal open reading frame. During trans-translation Ala-aminoacylated tmRNA acts like a tRNA, entering the A-site of stalled ribosomes, displacing the stalled mRNA. The ribosome then switches to translate the ORF on the tmRNA; the nascent peptide is terminated with the 'tag peptide' encoded by the tmRNA and targeted for degradation. The ribosome is freed to recommence translation, which seems to be the essential function of trans-translation. This is SsrA-binding protein from Desulfitobacterium hafniense (strain DSM 10664 / DCB-2).